Here is a 349-residue protein sequence, read N- to C-terminus: Protein-glutamate methylesterase/protein-glutamine glutaminase (349 aa).

One can recognise a Response regulatory domain in the interval 5-122 (RVLSVDDSAL…REGMLAYSEM (118 aa)). D56 is modified (4-aspartylphosphate). In terms of domain architecture, CheB-type methylesterase spans 152–344 (LLSSEKLIAI…QQMLAKISAG (193 aa)). Residues S164, H190, and D286 contribute to the active site.

The protein belongs to the CheB family. Post-translationally, phosphorylated by CheA. Phosphorylation of the N-terminal regulatory domain activates the methylesterase activity.

The protein localises to the cytoplasm. It carries out the reaction [protein]-L-glutamate 5-O-methyl ester + H2O = L-glutamyl-[protein] + methanol + H(+). The catalysed reaction is L-glutaminyl-[protein] + H2O = L-glutamyl-[protein] + NH4(+). Its function is as follows. Involved in chemotaxis. Part of a chemotaxis signal transduction system that modulates chemotaxis in response to various stimuli. Catalyzes the demethylation of specific methylglutamate residues introduced into the chemoreceptors (methyl-accepting chemotaxis proteins or MCP) by CheR. Also mediates the irreversible deamidation of specific glutamine residues to glutamic acid. The chain is Protein-glutamate methylesterase/protein-glutamine glutaminase from Escherichia coli O157:H7.